Reading from the N-terminus, the 737-residue chain is tRNA-dihydrouridine(47) synthase [NAD(P)(+)] (737 aa).

2 stretches are compositionally biased toward basic and acidic residues: residues 1-11 and 24-33; these read MESQETAKRPI and PATKRVKLDD. The interval 1-127 is disordered; the sequence is MESQETAKRP…GKKKRPKGQN (127 aa). A compositionally biased stretch (low complexity) spans 35–44; the sequence is PVPQIQEEPS. The segment covering 57 to 82 has biased composition (basic and acidic residues); the sequence is EDEKPTEQRQDDRDKRRGIAPIKKEY. C3H1-type zinc fingers lie at residues 142-166 and 187-208; these read CNSV…NALH and CPVW…VESH. FMN contacts are provided by residues 332–334 and Gln407; that span reads PLT. Cys439 (proton donor) is an active-site residue. FMN is bound by residues Lys479, His520, 577-579, and 601-602; these read NGD and GR.

This sequence belongs to the Dus family. Dus3 subfamily. It depends on FMN as a cofactor.

The protein resides in the cytoplasm. Its subcellular location is the nucleus. It catalyses the reaction 5,6-dihydrouridine(47) in tRNA + NAD(+) = uridine(47) in tRNA + NADH + H(+). The enzyme catalyses 5,6-dihydrouridine(47) in tRNA + NADP(+) = uridine(47) in tRNA + NADPH + H(+). It carries out the reaction a 5,6-dihydrouridine in mRNA + NAD(+) = a uridine in mRNA + NADH + H(+). The catalysed reaction is a 5,6-dihydrouridine in mRNA + NADP(+) = a uridine in mRNA + NADPH + H(+). Its function is as follows. Catalyzes the synthesis of dihydrouridine, a modified base found in the D-loop of most tRNAs. Specifically modifies U47 in cytoplasmic tRNAs. Catalyzes the synthesis of dihydrouridine in some mRNAs, thereby affecting their translation. The polypeptide is tRNA-dihydrouridine(47) synthase [NAD(P)(+)] (dus-3) (Neurospora crassa (strain ATCC 24698 / 74-OR23-1A / CBS 708.71 / DSM 1257 / FGSC 987)).